A 190-amino-acid chain; its full sequence is dITP/XTP pyrophosphatase (190 aa).

7 to 12 provides a ligand contact to substrate; it reads THNPNK. Mg(2+)-binding residues include Glu-39 and Asp-68. Residue Asp-68 is the Proton acceptor of the active site. Residues Thr-69, 148–151, Lys-171, and 176–177 contribute to the substrate site; these read FGYD and HR.

This sequence belongs to the HAM1 NTPase family. Homodimer. It depends on Mg(2+) as a cofactor.

The enzyme catalyses XTP + H2O = XMP + diphosphate + H(+). The catalysed reaction is dITP + H2O = dIMP + diphosphate + H(+). It carries out the reaction ITP + H2O = IMP + diphosphate + H(+). In terms of biological role, pyrophosphatase that catalyzes the hydrolysis of nucleoside triphosphates to their monophosphate derivatives, with a high preference for the non-canonical purine nucleotides XTP (xanthosine triphosphate), dITP (deoxyinosine triphosphate) and ITP. Seems to function as a house-cleaning enzyme that removes non-canonical purine nucleotides from the nucleotide pool, thus preventing their incorporation into DNA/RNA and avoiding chromosomal lesions. The protein is dITP/XTP pyrophosphatase of Christiangramia forsetii (strain DSM 17595 / CGMCC 1.15422 / KT0803) (Gramella forsetii).